A 262-amino-acid chain; its full sequence is Nurim (262 aa).

Residues 1–4 (MAPA) lie on the Nuclear side of the membrane. A helical membrane pass occupies residues 5–28 (LLLIPAALASFILAFGTGVEFVRF). At 29–58 (TSLRPLLGGIPESGGPDARQGWLAALQDRS) the chain is on the perinuclear space side. A helical transmembrane segment spans residues 59–80 (ILAPLAWDLGLLLLFVGQHSLM). At 81-97 (AAERVKAWTSRYFGVLQ) the chain is on the nuclear side. The helical transmembrane segment at 98–114 (RSLYVACTALALQLVMR) threads the bilayer. The Perinuclear space portion of the chain corresponds to 115–133 (YWEPIPKGPVLWEARAEPW). Residues 134–164 (ATWVPLLCFVLHVISWLLIFSILLVFDYAEL) form a helical membrane-spanning segment. Over 165–191 (MGLKQVYYHVLGLGEPLALKSPRALRL) the chain is Nuclear. A helical transmembrane segment spans residues 192 to 210 (FSHLRHPVCVELLTVLWVV). The Perinuclear space segment spans residues 211–216 (PTLGTD). A helical transmembrane segment spans residues 217–234 (RLLLAFLLTLYLGLAHGL). The Nuclear segment spans residues 235-262 (DQQDLRYLRAQLQRKLHLLSRPQDGEAE).

Belongs to the nurim family.

It is found in the nucleus inner membrane. The chain is Nurim (NRM) from Homo sapiens (Human).